The following is a 1257-amino-acid chain: Insulin receptor substrate 4 (1257 aa).

Residues 78–199 (EVCKRGYLRK…WYLLLSRLIL (122 aa)) enclose the PH domain. An IRS-type PTB domain is found at 231-335 (YKDVWQVIVK…EKMRALCADE (105 aa)). Disordered regions lie at residues 406-653 (VAHS…GGRF), 678-921 (IPEG…SSDY), and 1179-1257 (QDVA…KRGR). Residues 408 to 424 (HSRRGRLHLPRGRRSRR) show a composition bias toward basic residues. The YXXM motif 1 signature appears at 487–490 (YMPM). Residues 495–509 (SGNGRGSGGGQGSNG) are compositionally biased toward gly residues. A compositionally biased stretch (low complexity) spans 510–524 (QGSSSHSSGGNQCSG). Composition is skewed to gly residues over residues 525-542 (EGQG…GSGG) and 551-599 (GTAG…SGKG). Residues 627-640 (MPPPPPPPPPPPPA) show a composition bias toward pro residues. Residues 641–650 (GGTGGKGKSG) show a composition bias toward gly residues. The tract at residues 678-800 (IPEGAARGPH…KNPRNPQGGS (123 aa)) is CRK-binding. 3 short sequence motifs (YXXM motif) span residues 700–703 (YVPM), 717–720 (YMPM), and 743–746 (YMMM). Positions 750–761 (VSPPPAPSPPKA) are enriched in pro residues. Positions 763–774 (DTNKEDDSKDND) are enriched in basic and acidic residues. Residues 779-782 (YMFM) carry the YXXM motif 5 motif. Residues 800 to 810 (SSSKSWSSYFS) show a composition bias toward low complexity. A compositionally biased stretch (polar residues) spans 815–826 (FRSSPLGQNDNS). Residues 828-831 (YVPM) carry the YXXM motif 6 motif. A compositionally biased stretch (basic and acidic residues) spans 840–855 (GLDKEVSYNWDPKDAA). The GRB2-binding stretch occupies residues 895 to 897 (ITK). The residue at position 921 (Tyr921) is a Phosphotyrosine. Positions 921–924 (YVNM) match the YXXM motif 7 motif. Positions 1236 to 1257 (DTHVRMDFARRDNQFDSPKRGR) are enriched in basic and acidic residues.

As to quaternary structure, interacts with SOCS6 in response to stimulation with either insulin or IGF1. Interacts with CRK and CRKL. Interaction with CRK is stronger than with CRKL. Interacts with CRK via the phosphorylated YXXM motifs. Interacts with GRB2 and PIK3R1. Interacts with PLC-gamma, SHC1, PTK6, PPP4C and NISCH. Interacts with ASB4; this interaction promotes IRS4 proteasomal degradation. In terms of processing, phosphorylated on tyrosine residues in response to both insulin and IGF1 signaling. Phosphorylated on Tyr-921 in response to FGF2 signaling. Phosphorylation of Tyr-921 is required for GRB2, phospholipase C-gamma and phosphatidylinositol 3-kinase interaction. Ubiquitinated in a ASB4-dependent manner, leading to proteasomal degradation. In terms of tissue distribution, expressed in myoblasts. Expressed in liver and hepatocellular carcinoma.

The protein resides in the cell membrane. Functionally, acts as an interface between multiple growth factor receptors possessing tyrosine kinase activity, such as insulin receptor, IGF1R and FGFR1, and a complex network of intracellular signaling molecules containing SH2 domains. Involved in the IGF1R mitogenic signaling pathway. Promotes the AKT1 signaling pathway and BAD phosphorylation during insulin stimulation without activation of RPS6KB1 or the inhibition of apoptosis. Interaction with GRB2 enhances insulin-stimulated mitogen-activated protein kinase activity. May be involved in nonreceptor tyrosine kinase signaling in myoblasts. Plays a pivotal role in the proliferation/differentiation of hepatoblastoma cell through EPHB2 activation upon IGF1 stimulation. May play a role in the signal transduction in response to insulin and to a lesser extent in response to IL4 and GH on mitogenesis. Plays a role in growth, reproduction and glucose homeostasis. May act as negative regulators of the IGF1 signaling pathway by suppressing the function of IRS1 and IRS2. This chain is Insulin receptor substrate 4 (IRS4), found in Homo sapiens (Human).